A 1001-amino-acid chain; its full sequence is ATP-dependent DNA/RNA helicase DHX36 (1001 aa).

Residues 1-44 (MSYDYHQSWSRDGGPRGSGQGSSGGGGGGSRGSGGGGGGRGGRG) are required for recruitment to cytoplasmic stress granules. Residues 1–54 (MSYDYHQSWSRDGGPRGSGQGSSGGGGGGSRGSGGGGGGRGGRGRHPAHLKGRE) form a disordered region. The segment at 1 to 97 (MSYDYHQSWS…IVQLLNSVQA (97 aa)) is required for the pre-miR-134 transport. The interval 1-193 (MSYDYHQSWS…KKTDPRYIEM (193 aa)) is necessary for nuclear and nucleolar caps localizations. Residues 15-41 (PRGSGQGSSGGGGGGSRGSGGGGGGRG) are compositionally biased toward gly residues. Residues 46–68 (HPAHLKGREIGLWYAKKQTQKNK) form a DSM (DHX36-specific motif) region. Residues 46 to 98 (HPAHLKGREIGLWYAKKQTQKNKEAERQERAVVHMDERREEQIVQLLNSVQAK) are required for G4-DNA- and G4-RNA-binding. RecA-like domain stretches follow at residues 99-379 (TDKD…MIHI) and 380-621 (PGFT…DYQL). Positions 120–147 (EVSSEKKINSEKKLDNQEKKLLNQEKKT) form a coiled coil. At Ser154 the chain carries Phosphoserine. One can recognise a Helicase ATP-binding domain in the interval 210-380 (VNLINNHQVT…FGNCPMIHIP (171 aa)). 226 to 231 (GCGKTT) is a binding site for ATP. The necessary for interaction with single-stranded DNA at the 3'-end of the G4-DNA structure stretch occupies residues 258–310 (RRISAISVAERVATERAESCGNGNSTGYQIRLQSRLPRKQGSILYCTTGIILQ). The DEAH box signature appears at 327-330 (DEIH). Residues Glu328 and His330 each contribute to the Mg(2+) site. A Helicase C-terminal domain is found at 470 to 640 (ALIRYIVLEE…ELCLQIKILR (171 aa)). The necessary for interaction with single-stranded DNA at the 3'-end of the G4-DNA structure stretch occupies residues 491–550 (WDNISTLHDLLMSQVMFKSDKFLIIPLHSLMPTVNQTQVFKKTPPGVRKIVIATNIAETS). Residues 510-521 (DKFLIIPLHSLM) carry the Nuclear localization signal motif. ATP contacts are provided by residues Ser550 and 595–598 (RAGR). Residues 622–691 (PEILRTPLEE…LGVHLARLPV (70 aa)) are WH domain. Necessary for interaction with single-stranded DNA at the 3'-end of the G4-DNA structure regions lie at residues 631 to 690 (ELCL…ARLP), 842 to 853 (NLGKKRKMVKVH), and 863 to 893 (HPKS…IYLY). The interval 834–898 (PKVAKIRLNL…SIYLYDCTEV (65 aa)) is OB-fold-like subdomains. Lys940 bears the N6-acetyllysine mark. Ser956 is modified (phosphoserine).

This sequence belongs to the DEAD box helicase family. DEAH subfamily. In terms of assembly, found in a multi-helicase-TICAM1 complex at least composed of DHX36, DDX1, DDX21 and TICAM1; this complex exists in resting cells with or without dsRNA poly(I:C) ligand stimulation. Interacts (via C-terminus) with TICAM1 (via TIR domain). Interacts (via C-terminus) with DDX21; this interaction serves as bridges to TICAM1. Interacts with TERT; this interaction is dependent on the ability of DHX36 to bind to the G-quadruplex RNA (G4-RNA) structure present in the telomerase RNA template component (TERC). Interacts with DKC1; this interaction is dependent on the ability of DHX36 to bind to the G4-RNA structure present in TERC. Interacts with PARN; this interaction stimulates PARN to enhance uPA mRNA decay. Interacts with EXOSC3; this interaction occurs in a RNase-insensitive manner. Interacts with EXOSC10; this interaction occurs in a RNase-insensitive manner. Interacts with ILF3; this interaction occurs in a RNA-dependent manner. Interacts with ELAVL1; this interaction occurs in an RNA-dependent manner. Interacts with DDX5; this interaction occurs in a RNA-dependent manner. Interacts with DDX17; this interaction occurs in a RNA-dependent manner. Interacts with HDAC1; this interaction occurs in a RNA-dependent manner. Interacts with HDAC3; this interaction occurs in a RNA-dependent manner. Interacts with HDAC4. Interacts with AGO1. Interacts with AGO2. Interacts with ERCC6. The cofactor is Mg(2+). In terms of tissue distribution, expressed in spermatogonia stem cells and primary spermatocytes (at protein level). Expressed strongly in testis. Weakly expressed in heart, lung, liver, kidney, small intestine, spleen, lymphe node and thymus.

It localises to the nucleus. Its subcellular location is the cytoplasm. It is found in the cytosol. The protein localises to the stress granule. The protein resides in the nucleus speckle. It localises to the chromosome. Its subcellular location is the telomere. It is found in the mitochondrion. The protein localises to the perikaryon. The protein resides in the cell projection. It localises to the dendrite. Its subcellular location is the axon. It carries out the reaction ATP + H2O = ADP + phosphate + H(+). ATPase activity is enhanced in the presence of homomeric poly(U) RNAs, but not by double-stranded DNA (dsDNA), double-stranded RNA (dsRNA) and tRNA. Functionally, multifunctional ATP-dependent helicase that unwinds G-quadruplex (G4) structures. Plays a role in many biological processes such as genomic integrity, gene expression regulations and as a sensor to initiate antiviral responses. G4 structures correspond to helical structures containing guanine tetrads. Binds with high affinity to and unwinds G4 structures that are formed in nucleic acids (G4-DNA and G4-RNA). Plays a role in genomic integrity. Converts the G4-RNA structure present in telomerase RNA template component (TREC) into a double-stranded RNA to promote P1 helix formation that acts as a template boundary ensuring accurate reverse transcription. Plays a role in transcriptional regulation. Resolves G4-DNA structures in promoters of genes, such as YY1, KIT/c-kit and ALPL and positively regulates their expression. Plays a role in post-transcriptional regulation. Unwinds a G4-RNA structure located in the 3'-UTR polyadenylation site of the pre-mRNA TP53 and stimulates TP53 pre-mRNA 3'-end processing in response to ultraviolet (UV)-induced DNA damage. Binds to the precursor-microRNA-134 (pre-miR-134) terminal loop and regulates its transport into the synapto-dendritic compartment. Involved in the pre-miR-134-dependent inhibition of target gene expression and the control of dendritic spine size. Plays a role in the regulation of cytoplasmic mRNA translation and mRNA stability. Binds to both G4-RNA structures and alternative non-quadruplex-forming sequence within the 3'-UTR of the PITX1 mRNA regulating negatively PITX1 protein expression. Binds to both G4-RNA structure in the 5'-UTR and AU-rich elements (AREs) localized in the 3'-UTR of NKX2-5 mRNA to either stimulate protein translation or induce mRNA decay in an ELAVL1-dependent manner, respectively. Also binds to ARE sequences present in several mRNAs mediating exosome-mediated 3'-5' mRNA degradation. Involved in cytoplasmic urokinase-type plasminogen activator (uPA) mRNA decay. Component of a multi-helicase-TICAM1 complex that acts as a cytoplasmic sensor of viral double-stranded RNA (dsRNA) and plays a role in the activation of a cascade of antiviral responses including the induction of pro-inflammatory cytokines via the adapter molecule TICAM1. Required for the early embryonic development and hematopoiesis. Involved in the regulation of cardioblast differentiation and proliferation during heart development. Involved in spermatogonia differentiation. May play a role in ossification. The chain is ATP-dependent DNA/RNA helicase DHX36 from Mus musculus (Mouse).